The primary structure comprises 161 residues: Gamma-glutamylaminecyclotransferase A (161 aa).

Residue 26–29 (YGTL) participates in substrate binding. The active-site Proton acceptor is the glutamate 101.

This sequence belongs to the gamma-glutamylcyclotransferase family.

It catalyses the reaction epsilon-(gamma-L-glutamyl)-L-lysine = 5-oxo-L-proline + L-lysine. Functionally, may contribute to degradation of proteins cross-linked by transglutaminases by degrading the cross-link between a lysine and a glutamic acid residue. Catalyzes the formation of 5-oxo-L-proline from L-gamma-glutamyl-L-epsilon-lysine. This chain is Gamma-glutamylaminecyclotransferase A (ggact.1), found in Danio rerio (Zebrafish).